We begin with the raw amino-acid sequence, 414 residues long: Histidinol dehydrogenase (414 aa).

The NAD(+) site is built by Y116, Q177, and N200. Residues T223, Q245, and H248 each contribute to the substrate site. Q245 and H248 together coordinate Zn(2+). Active-site proton acceptor residues include E313 and H314. 4 residues coordinate substrate: H314, D347, E401, and H406. Residue D347 coordinates Zn(2+). H406 contributes to the Zn(2+) binding site.

The protein belongs to the histidinol dehydrogenase family. Zn(2+) serves as cofactor.

The catalysed reaction is L-histidinol + 2 NAD(+) + H2O = L-histidine + 2 NADH + 3 H(+). It functions in the pathway amino-acid biosynthesis; L-histidine biosynthesis; L-histidine from 5-phospho-alpha-D-ribose 1-diphosphate: step 9/9. Catalyzes the sequential NAD-dependent oxidations of L-histidinol to L-histidinaldehyde and then to L-histidine. This Staphylococcus epidermidis (strain ATCC 12228 / FDA PCI 1200) protein is Histidinol dehydrogenase.